Reading from the N-terminus, the 545-residue chain is MKTKFIFITGGVLSSLGKGLAAASIGALLKARGMTATIQKLDPYINVDPGTMNPFQHGEVYVTDDGAETDLDLGHYERYLDVSLSQKNNMTSGRVYHNVITKERRGDYLGGTVQVIPHITDEIKNAVMNVPNGEDVALIEIGGTVGDIEGLPFLEAIRQLRSELGSENVLYIHLTLVPYLAAAGEVKTKPTQHSVKELRSIGIHPDIILCRSEVDLDEDIKRKIALFCDVDRDAVFTAVDVKSIYQLPLSFYNEGLDQKIAIMLKLPAKNCNLESWRKLNHTLENPTGETTIGIVGKYVDLKEAYKSLHEALIHGGVANEVKVNLRYVNSEEITPENVKEKLAGCDGVLVPGGFGNRGVEGKITAIQYARENKVPFFGICLGMQCAVIEYARNVMGLKGANSEEFNPEGDDNVIYLMKEWYDYRTKKTENRCEESDKGGTMRLGAYPCKVVEGTKAMAAYGKTEIQERHRHRYEFNKEKFADQLVEAGLVLSGLSPDEALVEIVEVADHPWFLGCQFHPEFKSNPMHAHPLFRDFIKASCENKNK.

An amidoligase domain region spans residues 1–266 (MKTKFIFITG…DQKIAIMLKL (266 aa)). Ser-14 contributes to the CTP binding site. Ser-14 contributes to the UTP binding site. ATP is bound by residues 15–20 (SLGKGL) and Asp-72. Residues Asp-72 and Glu-140 each contribute to the Mg(2+) site. CTP contacts are provided by residues 147 to 149 (DIE), 187 to 192 (KTKPTQ), and Lys-223. Residues 187 to 192 (KTKPTQ) and Lys-223 contribute to the UTP site. The Glutamine amidotransferase type-1 domain maps to 291 to 545 (TIGIVGKYVD…IKASCENKNK (255 aa)). Gly-353 contacts L-glutamine. Catalysis depends on Cys-380, which acts as the Nucleophile; for glutamine hydrolysis. L-glutamine is bound by residues 381-384 (LGMQ), Glu-404, and Arg-472. Active-site residues include His-518 and Glu-520.

It belongs to the CTP synthase family. Homotetramer.

The enzyme catalyses UTP + L-glutamine + ATP + H2O = CTP + L-glutamate + ADP + phosphate + 2 H(+). The catalysed reaction is L-glutamine + H2O = L-glutamate + NH4(+). It catalyses the reaction UTP + NH4(+) + ATP = CTP + ADP + phosphate + 2 H(+). The protein operates within pyrimidine metabolism; CTP biosynthesis via de novo pathway; CTP from UDP: step 2/2. With respect to regulation, allosterically activated by GTP, when glutamine is the substrate; GTP has no effect on the reaction when ammonia is the substrate. The allosteric effector GTP functions by stabilizing the protein conformation that binds the tetrahedral intermediate(s) formed during glutamine hydrolysis. Inhibited by the product CTP, via allosteric rather than competitive inhibition. Its function is as follows. Catalyzes the ATP-dependent amination of UTP to CTP with either L-glutamine or ammonia as the source of nitrogen. Regulates intracellular CTP levels through interactions with the four ribonucleotide triphosphates. This chain is CTP synthase, found in Maridesulfovibrio salexigens (strain ATCC 14822 / DSM 2638 / NCIMB 8403 / VKM B-1763) (Desulfovibrio salexigens).